A 123-amino-acid polypeptide reads, in one-letter code: Immunoglobulin lambda variable 9-49 (123 aa).

A signal peptide spans M1–S19. The tract at residues Q20–S44 is framework-1. The Ig-like domain maps to P21–V123. Residues C41 and C112 are joined by a disulfide bond. The tract at residues S45–K51 is complementarity-determining-1. Positions V52–R68 are framework-2. The segment at V69–G76 is complementarity-determining-2. Positions S77–C112 are framework-3. Phosphotyrosine is present on Y96. A Phosphothreonine modification is found at T98. The tract at residues G113–V123 is complementarity-determining-3.

In terms of assembly, immunoglobulins are composed of two identical heavy chains and two identical light chains; disulfide-linked.

It is found in the secreted. The protein localises to the cell membrane. In terms of biological role, v region of the variable domain of immunoglobulin light chains that participates in the antigen recognition. Immunoglobulins, also known as antibodies, are membrane-bound or secreted glycoproteins produced by B lymphocytes. In the recognition phase of humoral immunity, the membrane-bound immunoglobulins serve as receptors which, upon binding of a specific antigen, trigger the clonal expansion and differentiation of B lymphocytes into immunoglobulins-secreting plasma cells. Secreted immunoglobulins mediate the effector phase of humoral immunity, which results in the elimination of bound antigens. The antigen binding site is formed by the variable domain of one heavy chain, together with that of its associated light chain. Thus, each immunoglobulin has two antigen binding sites with remarkable affinity for a particular antigen. The variable domains are assembled by a process called V-(D)-J rearrangement and can then be subjected to somatic hypermutations which, after exposure to antigen and selection, allow affinity maturation for a particular antigen. The polypeptide is Immunoglobulin lambda variable 9-49 (Homo sapiens (Human)).